Consider the following 257-residue polypeptide: tRNA dimethylallyltransferase (257 aa).

An ATP-binding site is contributed by Gly-15–Ser-22. Thr-17–Ser-22 is a substrate binding site.

This sequence belongs to the IPP transferase family. As to quaternary structure, monomer. It depends on Mg(2+) as a cofactor.

The enzyme catalyses adenosine(37) in tRNA + dimethylallyl diphosphate = N(6)-dimethylallyladenosine(37) in tRNA + diphosphate. In terms of biological role, catalyzes the transfer of a dimethylallyl group onto the adenine at position 37 in tRNAs that read codons beginning with uridine, leading to the formation of N6-(dimethylallyl)adenosine (i(6)A). This chain is tRNA dimethylallyltransferase, found in Oenococcus oeni (strain ATCC BAA-331 / PSU-1).